The following is a 461-amino-acid chain: MLEFLSQQKPKILIIGDFMVDNYTWCDCSRISPEAPVLVAKTLKEDKRLGGAANVYANLKSLGADVFALGVVGDDKSGKFLQENLKGEFLIQKGRKTPFKNRIMAHNQQVLRLDEEDISAILLENELIALFDEKIKDFKAVVLSDYAKGVLTPKVCKAVIKKAKALNIPVLVDPKGSDFSKYSGATLLTPNKKEALEALKFENLEGENLEKGIKKLKEDFALRYSIITLSEAGIALFDEGLKIAPAKALEVYDVTGAGDSVIAVLAFCLASGIEIFKACELANEAAAVVVSKIGSMSVSFDEIKSFNRVDFEKKIKSKEELLTLLKQNDKKIVFTNGCFDIVHFGHIKYLEKAKRLGDVLIVGLNSDASVKRLKGESRPVNSEFQRACMLAAFYFVDFVVIFDEDTPLELISFLKPDILIKGADYKDKLVVGADIVSKVELIDFEEGFSTSKIIEKIKDKK.

Positions 1–312 are ribokinase; that stretch reads MLEFLSQQKP…IKSFNRVDFE (312 aa). 191-194 serves as a coordination point for ATP; sequence NKKE. Aspartate 259 is an active-site residue. Residues 334–461 are cytidylyltransferase; the sequence is FTNGCFDIVH…KIIEKIKDKK (128 aa).

The protein in the N-terminal section; belongs to the carbohydrate kinase PfkB family. It in the C-terminal section; belongs to the cytidylyltransferase family. In terms of assembly, homodimer.

It carries out the reaction D-glycero-beta-D-manno-heptose 7-phosphate + ATP = D-glycero-beta-D-manno-heptose 1,7-bisphosphate + ADP + H(+). It catalyses the reaction D-glycero-beta-D-manno-heptose 1-phosphate + ATP + H(+) = ADP-D-glycero-beta-D-manno-heptose + diphosphate. It participates in nucleotide-sugar biosynthesis; ADP-L-glycero-beta-D-manno-heptose biosynthesis; ADP-L-glycero-beta-D-manno-heptose from D-glycero-beta-D-manno-heptose 7-phosphate: step 1/4. The protein operates within nucleotide-sugar biosynthesis; ADP-L-glycero-beta-D-manno-heptose biosynthesis; ADP-L-glycero-beta-D-manno-heptose from D-glycero-beta-D-manno-heptose 7-phosphate: step 3/4. Functionally, catalyzes the phosphorylation of D-glycero-D-manno-heptose 7-phosphate at the C-1 position to selectively form D-glycero-beta-D-manno-heptose-1,7-bisphosphate. Its function is as follows. Catalyzes the ADP transfer from ATP to D-glycero-beta-D-manno-heptose 1-phosphate, yielding ADP-D-glycero-beta-D-manno-heptose. This chain is Bifunctional protein HldE, found in Campylobacter jejuni subsp. jejuni serotype O:6 (strain 81116 / NCTC 11828).